Here is a 427-residue protein sequence, read N- to C-terminus: Probable protein phosphatase 2C 64 (427 aa).

Residues 1–36 (MGNCVARSGTAVDAGGDGGEDGKRRRRRWKAPREDQ) form a disordered region. The region spanning 53 to 331 (TATVYTQQGR…DDCAVVCLYL (279 aa)) is the PPM-type phosphatase domain. Positions 89, 90, 276, and 322 each coordinate Mn(2+).

The protein belongs to the PP2C family. Mg(2+) is required as a cofactor. Mn(2+) serves as cofactor.

It carries out the reaction O-phospho-L-seryl-[protein] + H2O = L-seryl-[protein] + phosphate. The enzyme catalyses O-phospho-L-threonyl-[protein] + H2O = L-threonyl-[protein] + phosphate. The chain is Probable protein phosphatase 2C 64 from Oryza sativa subsp. japonica (Rice).